The chain runs to 357 residues: MIQEMWTQWVLNIRASCLGALAATPFIWCFIFKSLFTFSIFTSLQISIFYWAVLGAHVTILCYCYITFTKEWSYYIEALGIACLFLTMLTFFISHLMWAPLYTLPFVFVLNCICLSLWVPITYDIVYLCPFITYKYYELGFLNAMLLYYVMVANRMYLSVIFMCPFVLFLGMGVFALKNFHEHPVFENILITCKPIFTAKNKYKTKGTEVNMKLVVHNLGAVLFLLAVEFASVVSVVQRLDIFVGMQNYLFLLFVSMLCCCMFSLPSNAICVVLETFAVVIIIVIHVLIDKLPISIIGGLLVIVILLMCQAIGCQIEIIRTKLAGDVGGPKLCLFLCTVCNIVVSVALTCCNKSEQL.

The protein belongs to the herpesviridae BMRF2 family.

This Saimiri sciureus (Common squirrel monkey) protein is Gene 58 protein (58).